Reading from the N-terminus, the 845-residue chain is Aryl hydrocarbon receptor (845 aa).

A propeptide spanning residues 1–10 (MNSSSASITY) is cleaved from the precursor. Polar residues predominate over residues 1-10 (MNSSSASITY). A disordered region spans residues 1–39 (MNSSSASITYASRKRRKPVQKTVKPVPAEGIKSNPSKRH). 2 short sequence motifs (nuclear localization signal) span residues 13 to 16 (RKRR) and 37 to 42 (KRHRDR). A bHLH domain is found at 27–80 (PAEGIKSNPSKRHRDRLNTELDRLASLLPFPQDVVNKLDKLSVLRLSVSYLRAK). Required for maintaining the overall integrity of the AHR:ARNT heterodimer and its transcriptional activity regions lie at residues 50–82 (LASLLPFPQDVVNKLDKLSVLRLSVSYLRAKSF), 117–125 (LLQALNGFV), and 265–267 (FAI). The short motif at 64–72 (LDKLSVLRL) is the Nuclear export signal element. Positions 110–180 (NLQEGEFLLQ…RQLHWALNPS (71 aa)) constitute a PAS 1 domain. Residues 274 to 341 (PSILEIRTKN…CAEYHIRMIK (68 aa)) form the PAS 2 domain. The PAC domain occupies 347-385 (LIVFRLLTKDNRWTWVQSNARLVYKNGRPDYIIATQRPL). The tract at residues 820-845 (NNTQPTTHLHPSEARPFSDLTSSGFL) is disordered.

As to quaternary structure, homodimer. Heterodimer; efficient DNA binding requires dimerization with another bHLH protein. Interacts with ARNT; the heterodimer ARNT:AHR binds to core DNA sequence 5'-TGCGTG-3' within the dioxin response element (DRE) of target gene promoters and activates their transcription. Binds MYBBP1A. Interacts with coactivators including SRC-1, RIP140 and NOCA7, and with the corepressor SMRT. Interacts with NEDD8 and IVNS1ABP. Interacts with BMAL1. Interacts with HSP90AB1. Interacts with TIPARP; leading to mono-ADP-ribosylation of AHR and subsequent inhibition of AHR. Post-translationally, mono-ADP-ribosylated, leading to inhibit transcription activator activity of AHR.

The protein resides in the cytoplasm. It is found in the nucleus. Its function is as follows. Ligand-activated transcription factor that enables cells to adapt to changing conditions by sensing compounds from the environment, diet, microbiome and cellular metabolism, and which plays important roles in development, immunity and cancer. Upon ligand binding, translocates into the nucleus, where it heterodimerizes with ARNT and induces transcription by binding to xenobiotic response elements (XRE). Regulates a variety of biological processes, including angiogenesis, hematopoiesis, drug and lipid metabolism, cell motility and immune modulation. Xenobiotics can act as ligands: upon xenobiotic-binding, activates the expression of multiple phase I and II xenobiotic chemical metabolizing enzyme genes (such as the CYP1A1 gene). Mediates biochemical and toxic effects of halogenated aromatic hydrocarbons. Next to xenobiotics, natural ligands derived from plants, microbiota, and endogenous metabolism are potent AHR agonists. Tryptophan (Trp) derivatives constitute an important class of endogenous AHR ligands. Acts as a negative regulator of anti-tumor immunity: indoles and kynurenic acid generated by Trp catabolism act as ligand and activate AHR, thereby promoting AHR-driven cancer cell motility and suppressing adaptive immunity. Regulates the circadian clock by inhibiting the basal and circadian expression of the core circadian component PER1. Inhibits PER1 by repressing the CLOCK-BMAL1 heterodimer mediated transcriptional activation of PER1. The heterodimer ARNT:AHR binds to core DNA sequence 5'-TGCGTG-3' within the dioxin response element (DRE) of target gene promoters and activates their transcription. This chain is Aryl hydrocarbon receptor (AHR), found in Delphinapterus leucas (Beluga whale).